Reading from the N-terminus, the 210-residue chain is MSEQAVKVTNINNWVLGLTGGIGCGKTAVSNMLEALGICVVDADIIARQVVEPGSEGLKAIVTHFGADILLADGNLNRSALRELVFSNNEHKNWLNTLLHPLIRQQIIIDLNNATSPYVVLVAPLLFENGLDKYCNRTLLIDVPKNVQIERTVKRDNISLEQVNSIIAAQMSREQKQQQADDILNNDRSLTLVKHDLIALHKGYLKLALK.

Positions 15-210 (VLGLTGGIGC…HKGYLKLALK (196 aa)) constitute a DPCK domain. 23–28 (GCGKTA) contacts ATP.

The protein belongs to the CoaE family.

It localises to the cytoplasm. The enzyme catalyses 3'-dephospho-CoA + ATP = ADP + CoA + H(+). Its pathway is cofactor biosynthesis; coenzyme A biosynthesis; CoA from (R)-pantothenate: step 5/5. Its function is as follows. Catalyzes the phosphorylation of the 3'-hydroxyl group of dephosphocoenzyme A to form coenzyme A. The chain is Dephospho-CoA kinase from Pseudoalteromonas translucida (strain TAC 125).